Here is a 452-residue protein sequence, read N- to C-terminus: Inner membrane metabolite transport protein YdjE (452 aa).

Over 1 to 20 (MEQYDQIGARLDRLPLARFH) the chain is Cytoplasmic. Residues 21 to 43 (YRIFGIISFSLLLTGFLSYSGNV) traverse the membrane as a helical segment. At 44 to 57 (VLAKLVSNGWSNNF) the chain is on the periplasmic side. A helical transmembrane segment spans residues 58–80 (LNAAFTSALMFGYFIGSLTGGFI). Residues 81–91 (GDYFGRRRAFR) are Cytoplasmic-facing. The chain crosses the membrane as a helical span at residues 92 to 114 (INLLIVGIAATGAAFVPDMYWLI). At 115–117 (FFR) the chain is on the periplasmic side. The chain crosses the membrane as a helical span at residues 118–140 (FLMGTGMGALIMVGYASFTEFIP). The Cytoplasmic portion of the chain corresponds to 141 to 152 (ATVRGKWSARLS). The helical transmembrane segment at 153–175 (FVGNWSPMLSAAIGVVVIAFFSW) threads the bilayer. Residues 176–178 (RIM) lie on the Periplasmic side of the membrane. A helical membrane pass occupies residues 179-198 (FLLGGIGILLAWFLSGKYFI). Residues 199–265 (ESPRWLAGKG…KGEMLRRTLV (67 aa)) are Cytoplasmic-facing. The chain crosses the membrane as a helical span at residues 266–288 (AITVLIAMNISLYTITVWIPTIF). Residues 289–297 (VNSGIDVDK) are Periplasmic-facing. Residues 298-320 (SILMTAVIMIGAPVGIFIAALII) form a helical membrane-spanning segment. Over 321–326 (DHFPRR) the chain is Cytoplasmic. The helical transmembrane segment at 327-344 (LFGSTLLIIIAVLGYIYS) threads the bilayer. Over 345–353 (IQTTEWAIL) the chain is Periplasmic. The chain crosses the membrane as a helical span at residues 354-376 (IYGLVMIFFLYMYVCFASAVYIP). The Cytoplasmic segment spans residues 377–388 (ELWPTHLRLRGS). The helical transmembrane segment at 389 to 411 (GFVNAVGRIVAVFTPYGVAALLT) threads the bilayer. Residues 412-415 (HYGS) lie on the Periplasmic side of the membrane. Residues 416 to 438 (ITVFMVLGVMLLLCALVLSIFGI) traverse the membrane as a helical segment. Residues 439–452 (ETRKVSLEEISEVN) lie on the Cytoplasmic side of the membrane.

This sequence belongs to the major facilitator superfamily. Sugar transporter (TC 2.A.1.1) family.

It localises to the cell inner membrane. The chain is Inner membrane metabolite transport protein YdjE (ydjE) from Escherichia coli (strain K12).